Reading from the N-terminus, the 441-residue chain is G-protein coupled receptor family C group 5 member C (441 aa).

Residues M1–A22 form the signal peptide. The Extracellular portion of the chain corresponds to Q23–G49. The chain crosses the membrane as a helical span at residues I50–L70. Topologically, residues V71–S84 are cytoplasmic. The helical transmembrane segment at L85–A105 threads the bilayer. The Extracellular segment spans residues C106–R119. Residues F120–L140 form a helical membrane-spanning segment. At N141–V154 the chain is on the cytoplasmic side. The chain crosses the membrane as a helical span at residues I155 to I175. Topologically, residues I176–D207 are extracellular. N190 carries N-linked (GlcNAc...) asparagine glycosylation. A helical transmembrane segment spans residues F208–P228. Topologically, residues T229 to H240 are cytoplasmic. The chain crosses the membrane as a helical span at residues G241–M261. Over Y262–T278 the chain is Extracellular. A helical transmembrane segment spans residues L279 to V299. Over S300 to W441 the chain is Cytoplasmic. Residues S343, S382, S402, and S405 each carry the phosphoserine modification. Y413 bears the Phosphotyrosine mark. Residues Q419–W441 are disordered. T422 carries the phosphothreonine modification. Positions S430 to W441 are enriched in polar residues. S434 is subject to Phosphoserine.

It belongs to the G-protein coupled receptor 3 family.

The protein resides in the cell membrane. Functionally, this retinoic acid-inducible G-protein coupled receptor provide evidence for a possible interaction between retinoid and G-protein signaling pathways. This Rattus norvegicus (Rat) protein is G-protein coupled receptor family C group 5 member C (Gprc5c).